The sequence spans 349 residues: Anthranilate phosphoribosyltransferase (349 aa).

Residues Gly-82, 85-86 (GD), 92-95 (NVST), 110-118 (KHGNRAVSG), and Ser-122 each bind 5-phospho-alpha-D-ribose 1-diphosphate. An anthranilate-binding site is contributed by Gly-82. Ser-94 provides a ligand contact to Mg(2+). Asn-113 provides a ligand contact to anthranilate. Arg-168 contributes to the anthranilate binding site. Mg(2+) is bound by residues Asp-227 and Glu-228.

Belongs to the anthranilate phosphoribosyltransferase family. As to quaternary structure, homodimer. It depends on Mg(2+) as a cofactor.

It carries out the reaction N-(5-phospho-beta-D-ribosyl)anthranilate + diphosphate = 5-phospho-alpha-D-ribose 1-diphosphate + anthranilate. It participates in amino-acid biosynthesis; L-tryptophan biosynthesis; L-tryptophan from chorismate: step 2/5. Functionally, catalyzes the transfer of the phosphoribosyl group of 5-phosphorylribose-1-pyrophosphate (PRPP) to anthranilate to yield N-(5'-phosphoribosyl)-anthranilate (PRA). The polypeptide is Anthranilate phosphoribosyltransferase (Pseudomonas syringae pv. tomato (strain ATCC BAA-871 / DC3000)).